Here is a 156-residue protein sequence, read N- to C-terminus: 6,7-dimethyl-8-ribityllumazine synthase (156 aa).

Residues phenylalanine 22, 57 to 59, and 81 to 83 each bind 5-amino-6-(D-ribitylamino)uracil; these read AVE and TVI. Residue 86-87 coordinates (2S)-2-hydroxy-3-oxobutyl phosphate; the sequence is GT. Histidine 89 acts as the Proton donor in catalysis. 5-amino-6-(D-ribitylamino)uracil is bound at residue phenylalanine 114. A (2S)-2-hydroxy-3-oxobutyl phosphate-binding site is contributed by arginine 128.

It belongs to the DMRL synthase family. As to quaternary structure, forms an icosahedral capsid composed of 60 subunits, arranged as a dodecamer of pentamers.

The catalysed reaction is (2S)-2-hydroxy-3-oxobutyl phosphate + 5-amino-6-(D-ribitylamino)uracil = 6,7-dimethyl-8-(1-D-ribityl)lumazine + phosphate + 2 H2O + H(+). It functions in the pathway cofactor biosynthesis; riboflavin biosynthesis; riboflavin from 2-hydroxy-3-oxobutyl phosphate and 5-amino-6-(D-ribitylamino)uracil: step 1/2. Catalyzes the formation of 6,7-dimethyl-8-ribityllumazine by condensation of 5-amino-6-(D-ribitylamino)uracil with 3,4-dihydroxy-2-butanone 4-phosphate. This is the penultimate step in the biosynthesis of riboflavin. The polypeptide is 6,7-dimethyl-8-ribityllumazine synthase (Vibrio campbellii (strain ATCC BAA-1116)).